Consider the following 54-residue polypeptide: Large ribosomal subunit protein bL33 (54 aa).

Belongs to the bacterial ribosomal protein bL33 family.

This chain is Large ribosomal subunit protein bL33, found in Corynebacterium efficiens (strain DSM 44549 / YS-314 / AJ 12310 / JCM 11189 / NBRC 100395).